The primary structure comprises 345 residues: RDS/peripherin-like protein xRDS35 (345 aa).

The Cytoplasmic portion of the chain corresponds to 1–24; sequence MVLFKAKFSFQRRVKLAQTLWLLS. A helical membrane pass occupies residues 25–43; it reads WLSVLVGCLTFGMGIFLKV. Topologically, residues 44–61 are lumenal; the sequence is QLWIHNEVMENTSAHAVP. An N-linked (GlcNAc...) asparagine glycan is attached at Asn-54. Residues 62–80 form a helical membrane-spanning segment; it reads NTVITAGLVGILLGIYAGK. At 81–99 the chain is on the cytoplasmic side; the sequence is VSQASMDVTKYQRWKSFMM. Residues 100 to 123 traverse the membrane as a helical segment; sequence PFFFLAILSCLVCLAALVLSVALR. Topologically, residues 124-264 are lumenal; the sequence is GTLEESLKIG…LSYYTGIMAT (141 aa). An N-linked (GlcNAc...) asparagine glycan is attached at Asn-229. Residues 265 to 290 traverse the membrane as a helical segment; it reads NGAAVTLSFLLQASVLVSLRYLHTSM. The Cytoplasmic segment spans residues 291 to 345; that stretch reads DKISGPDDMEADTEGFILEKGVTETMNTTLEKMKGLFMSNQVETAEGGGEAAAAS.

It belongs to the PRPH2/ROM1 family. Homodimer; disulfide-linked. In terms of tissue distribution, rod specific.

It is found in the membrane. This chain is RDS/peripherin-like protein xRDS35 (rds35), found in Xenopus laevis (African clawed frog).